A 142-amino-acid chain; its full sequence is Small ribosomal subunit protein uS8c (142 aa).

The protein belongs to the universal ribosomal protein uS8 family. Part of the 30S ribosomal subunit.

The protein resides in the plastid. Its function is as follows. One of the primary rRNA binding proteins, it binds directly to 16S rRNA central domain where it helps coordinate assembly of the platform of the 30S subunit. In Euglena longa (Euglenophycean alga), this protein is Small ribosomal subunit protein uS8c (rps8).